Consider the following 160-residue polypeptide: uncharacterized protein (160 aa).

Positions 26, 28, 50, and 61 each coordinate Zn(2+). A GRF-type; atypical zinc finger spans residues 26–69; that stretch reads CWCGEEIITFTSKTKENPYRRFYRCAIAMKRENEEHLFKWVDEA.

This is an uncharacterized protein from Arabidopsis thaliana (Mouse-ear cress).